The sequence spans 1280 residues: SET and MYND domain-containing protein DDB_G0284059 (1280 aa).

Disordered regions lie at residues 1–35 (MTKKIKLSNSESNKVNNNNNNNHGNGHNHNHSHNH) and 111–167 (INKI…QKQQ). Composition is skewed to low complexity over residues 16–25 (NNNNNNNHGN) and 117–153 (ENSPPSSPTLSSSTNTTTDRQELPQQQQQPQQQQSQP). 2 TPR repeats span residues 272–305 (SKGYKNKGNELFQKKQYSDALLLYNESLRIYDME) and 383–416 (HKLYYRRGICYYHLRKHYKAKKDFLRAHTLIEKR). The stretch at 439 to 468 (QKDEEIEQELDNKNNNSNDDEKQQQQQQQQ) forms a coiled coil. The Zn(2+) site is built by cysteine 533, cysteine 536, cysteine 546, cysteine 549, cysteine 555, cysteine 559, histidine 568, and cysteine 572. The MYND-type zinc-finger motif lies at 533-572 (CYNCFKEILSPIYCKECSNSQYCSNKCLNEDYVKQHGREC). Disordered regions lie at residues 601–642 (ANKG…QNLN), 659–726 (ALSS…TTTT), 854–905 (QQQQ…PFSP), and 1039–1079 (AKLQ…LNNN). Composition is skewed to low complexity over residues 659 to 697 (ALSSASTPTTATATTTTTTTTATTPTTLAETLSSTSLTE), 712 to 726 (SSSSSSSSSSSTTTT), 854 to 898 (QQQQ…QNPP), 1042 to 1053 (QQQQQQQQQHQQ), and 1061 to 1079 (NSNPTNLGSNNNNNYLNNN). The SET domain occupies 822 to 965 (CQLTTYTFAI…KGEEILGCYG (144 aa)). The TPR 3 repeat unit spans residues 1218–1251 (GREYSKLGQIYLTLGEIEKSEDAIEKAESILMSW).

This sequence belongs to the class V-like SAM-binding methyltransferase superfamily.

Functionally, probable methyltransferase. The sequence is that of SET and MYND domain-containing protein DDB_G0284059 from Dictyostelium discoideum (Social amoeba).